A 384-amino-acid polypeptide reads, in one-letter code: FAD-dependent urate hydroxylase (384 aa).

FAD-binding positions include glycine 11, 30–31 (EA), serine 43, and valine 125. Residues asparagine 178, arginine 204, and 216–218 (YFF) contribute to the substrate site. Residues aspartate 285 and 295 to 299 (GQGGC) each bind FAD.

This sequence belongs to the FAD-dependent urate hydroxylase family. In terms of assembly, monomer. FAD is required as a cofactor.

The enzyme catalyses urate + NADH + O2 + H(+) = 5-hydroxyisourate + NAD(+) + H2O. It functions in the pathway purine metabolism; urate degradation. In terms of biological role, catalyzes the hydroxylation of urate to 5-hydroxyisourate (HIU). The chain is FAD-dependent urate hydroxylase from Klebsiella pneumoniae subsp. pneumoniae (strain ATCC 700721 / MGH 78578).